We begin with the raw amino-acid sequence, 220 residues long: Imidazoleglycerol-phosphate dehydratase (220 aa).

Belongs to the imidazoleglycerol-phosphate dehydratase family.

It carries out the reaction D-erythro-1-(imidazol-4-yl)glycerol 3-phosphate = 3-(imidazol-4-yl)-2-oxopropyl phosphate + H2O. It functions in the pathway amino-acid biosynthesis; L-histidine biosynthesis; L-histidine from 5-phospho-alpha-D-ribose 1-diphosphate: step 6/9. This chain is Imidazoleglycerol-phosphate dehydratase (HIS3), found in Eremothecium gossypii (strain ATCC 10895 / CBS 109.51 / FGSC 9923 / NRRL Y-1056) (Yeast).